We begin with the raw amino-acid sequence, 2508 residues long: Male gametocyte surface protein P230p (2508 aa).

Residues 1–34 (MFIYLFIYLFFKMDKKRTFYYLFFFFTFLVYVLY) form the signal peptide. Residues asparagine 230, asparagine 254, asparagine 362, and asparagine 414 are each glycosylated (N-linked (GlcNAc...) asparagine). The 123-residue stretch at 394 to 516 (KILGLSTNEK…GLGETSVDKD (123 aa)) folds into the 6-Cys 1 domain. Cysteine 443 and cysteine 493 are joined by a disulfide. Residues asparagine 601 and asparagine 674 are each glycosylated (N-linked (GlcNAc...) asparagine). 6-Cys domains are found at residues 676–800 (SVSF…IVKR), 831–1096 (ITYL…LKSF), 1099–1231 (PIEG…LELN), 1268–1428 (KKHI…IPQH), and 1433–1565 (KFYG…NEDI). Cysteine 680 and cysteine 700 are disulfide-bonded. Asparagine 703 is a glycosylation site (N-linked (GlcNAc...) asparagine). Cystine bridges form between cysteine 714/cysteine 775 and cysteine 725/cysteine 773. Asparagine 779, asparagine 849, asparagine 986, asparagine 995, asparagine 1065, and asparagine 1074 each carry an N-linked (GlcNAc...) asparagine glycan. 2 cysteine pairs are disulfide-bonded: cysteine 835-cysteine 856 and cysteine 871-cysteine 1072. 3 cysteine pairs are disulfide-bonded: cysteine 1103-cysteine 1129, cysteine 1144-cysteine 1206, and cysteine 1157-cysteine 1204. An N-linked (GlcNAc...) asparagine glycan is attached at asparagine 1231. Intrachain disulfides connect cysteine 1272–cysteine 1293, cysteine 1308–cysteine 1404, cysteine 1437–cysteine 1464, cysteine 1478–cysteine 1547, and cysteine 1488–cysteine 1545. Asparagine 1385 carries an N-linked (GlcNAc...) asparagine glycan. N-linked (GlcNAc...) asparagine glycans are attached at residues asparagine 1525, asparagine 1550, asparagine 1567, asparagine 1750, asparagine 1755, and asparagine 1788. 6-Cys domains follow at residues 1656-1804 (KKKI…IKKN) and 1807-1984 (KILG…IVGD). The cysteines at positions 1704 and 1782 are disulfide-linked. Cystine bridges form between cysteine 1811/cysteine 1883, cysteine 1897/cysteine 1966, and cysteine 1908/cysteine 1964. N-linked (GlcNAc...) asparagine glycans are attached at residues asparagine 2016 and asparagine 2047. The tract at residues 2081-2113 (SDEGDGYQADEDIGGEDDAEDVDGEGDDEDDNI) is disordered. Over residues 2082–2112 (DEGDGYQADEDIGGEDDAEDVDGEGDDEDDN) the composition is skewed to acidic residues. Residues asparagine 2143, asparagine 2211, asparagine 2239, and asparagine 2255 are each glycosylated (N-linked (GlcNAc...) asparagine). 6-Cys domains are found at residues 2197–2354 (IINI…VKSN) and 2357–2481 (KIYG…YEPY). Intrachain disulfides connect cysteine 2361–cysteine 2386, cysteine 2400–cysteine 2461, and cysteine 2411–cysteine 2459.

It localises to the cell surface. The protein localises to the cell membrane. Functionally, plays an essential role in male gamete fertility. Required for the binding to erythrocytes and thus, for the formation of exflagellation centers. This chain is Male gametocyte surface protein P230p (PFS230P), found in Plasmodium falciparum (isolate 3D7).